A 379-amino-acid chain; its full sequence is Probable G-protein coupled receptor No18 (379 aa).

The Extracellular segment spans residues 5–36 (EASITGRTAPELNASAAPLDDERELGETVAAT). Asn-17 carries N-linked (GlcNAc...) asparagine glycosylation. A helical transmembrane segment spans residues 37–58 (ALLLAIILVTIVGNSLVIISVF). The Cytoplasmic segment spans residues 59–68 (TYRPLRSVQN). A helical membrane pass occupies residues 69–90 (FFVVSLAVADLTVALFVLPLNV). The Extracellular segment spans residues 91-107 (AYRLLNQWLLGSYLCQM). A disulfide bridge links Cys-105 with Cys-184. The helical transmembrane segment at 108-128 (WLTCDILCCTSSILNLCVIAL) threads the bilayer. Residues 129–148 (DRYWAITDPINYAQKRTIRR) lie on the Cytoplasmic side of the membrane. Residues 149–171 (VNTMIAAVWALSLVISVPPLLGW) traverse the membrane as a helical segment. Topologically, residues 172–196 (NDWPAQFTEDTPCTLTQERLFVVYS) are extracellular. A helical transmembrane segment spans residues 197–218 (SSGSFFIPLIIMSVVYAKIFFA). Residues 219 to 303 (TKRRLRERTR…LSKERKAARV (85 aa)) are Cytoplasmic-facing. Positions 234-276 (AVPAPPQRTSSRPLAELESVASQEDETEPSPEPEPLSSRADKP) are disordered. Residues 304–325 (LGVIMGVFVVCWLPFFLMYAIV) form a helical membrane-spanning segment. Residues 326–340 (PFCTNCAPPSQRVVD) lie on the Extracellular side of the membrane. A helical membrane pass occupies residues 341–362 (FVTWLGYVNSSLNPIIYTIYNK). Residues 363–375 (DFRTAFSRLLRCD) are Cytoplasmic-facing.

Belongs to the G-protein coupled receptor 1 family.

The protein localises to the cell membrane. Probable G-protein coupled receptor for an amine. The chain is Probable G-protein coupled receptor No18 from Amphibalanus amphitrite (Striped barnacle).